The following is a 160-amino-acid chain: UPF0225 protein CGSHiEE_01665 (160 aa).

Belongs to the UPF0225 family.

This is UPF0225 protein CGSHiEE_01665 from Haemophilus influenzae (strain PittEE).